A 174-amino-acid chain; its full sequence is Secreted cysteine-rich protein UMAG_00792 (174 aa).

A signal peptide spans 1–26; the sequence is MVSFKSSSLFLHSLSALLVLTTLSSA. Asn-77 carries an N-linked (GlcNAc...) asparagine glycan.

As to quaternary structure, secreted cysteine-rich proteins (SCRPs) are predicted to form amyloids.

It is found in the secreted. Secreted cysteine-rich protein that might form amyloid strutures which are involved in attachment to hydrophobic surfaces and in formation of hydrophobic aerial hyphae. This is Secreted cysteine-rich protein UMAG_00792 from Mycosarcoma maydis (Corn smut fungus).